The sequence spans 394 residues: Suppressor APC domain-containing protein 2 (394 aa).

3 disordered regions span residues 1–23 (MAGA…STEG), 95–125 (LLSA…RLVF), and 150–188 (GPSA…SSSA). Residues 177–188 (SQSAALEPSSSA) are compositionally biased toward polar residues. Position 219 is a phosphothreonine (threonine 219). Residues 227 to 277 (GLLKQMKELEQEKEVLLQGLEMMARGRDWYQQQLQRVQERQRRLGQSRASA) adopt a coiled-coil conformation. Serine 284 is subject to Phosphoserine. Residues 336 to 384 (QQQTILMLKEQNRLLTQEVTEKSERITQLEQEKSALIKQLFEARALSQQ) are a coiled coil.

Interacts with a spindle orientation complex at least composed of GNAI1, GPSM2 and NUMA1. Interacts with GPSM2 (via TPR motifs); this interaction is required to prevent GPSM2 anchoring at the mitotic apical cortex and is inhibited in presence of NUMA1 in a dose dependent manner. Interacts with PARD3. Expressed in 5-month-old fetal tissues, including stomach, intestine, colon, liver, brain, lung, heart, spleen and kidney. Undetectable in non-cancerous adult tissues. Expressed in many primary gastric carcinoma, but almost not in adjacent normal mucosa. Expressed preferentially in M and G1 phases, compared to S and G2 phases. Expression is up-regulated in hepatocellular carcinoma (HCC) and colorectal cancer (CRC) tissues (at protein level).

Its subcellular location is the cytoplasm. It is found in the nucleus. The protein resides in the cell cortex. The protein localises to the apical cell membrane. It localises to the cell junction. Its subcellular location is the tight junction. Its function is as follows. Plays a role in planar mitotic spindle orientation in retinal progenitor cells (RPCs) and promotes the production of symmetric terminal divisions. Negatively regulates the mitotic apical cortex localization of GPSM2. Involved also in positive regulation of cell proliferation and tumor cell growth. The protein is Suppressor APC domain-containing protein 2 of Homo sapiens (Human).